We begin with the raw amino-acid sequence, 885 residues long: Sensor histidine kinase KdpD (885 aa).

4 helical membrane passes run 384-404, 415-435, 436-456, and 464-484; these read AIDM…GLWI, IILM…RSFI, IGFL…TEPR, and FDYP…SALL. The Histidine kinase domain occupies 660–880; the sequence is SISHDIRTPL…IFYFNIYTDF (221 aa). His663 is modified (phosphohistidine; by autocatalysis).

The protein resides in the membrane. It carries out the reaction ATP + protein L-histidine = ADP + protein N-phospho-L-histidine.. With respect to regulation, cyclic di-AMP is a negative regulator of the Kdp system. Functionally, member of the two-component regulatory system KdpD/KdpE that regulates the transcription of a series of virulence factors through sensing external K(+) concentrations. Also regulates capsular polysaccharide production. May function as a membrane-associated protein kinase that phosphorylates KdpE in response to environmental signals. In turn, KpdE functions as a transcriptional regulator by direct binding to promoter regions of target genes including spa, hla, aur and geh. The chain is Sensor histidine kinase KdpD from Staphylococcus aureus (strain NCTC 8325 / PS 47).